Here is a 179-residue protein sequence, read N- to C-terminus: HTH-type transcriptional regulator AldR (179 aa).

Residues 32–93 enclose the HTH asnC-type domain; the sequence is LDEVDRRILS…DIDPVAVGLP (62 aa). The H-T-H motif DNA-binding region spans 51–70; that stretch reads NNALADTVGIAPSTCHGRVR.

As to quaternary structure, homooctamer. Homotetramer. Tetramer of dimers. The N-terminal DNA-binding domains are swapped, forming a dimer, and four dimers are assembled into an octamer through crystal symmetry.

With respect to regulation, the DNA-binding activity of AldR is modulated by interaction of AldR with various amino acids. Alanine, tryptophan, tyrosine and aspartate completely abolish the DNA binding ability of AldR. On the other hand, glutamate and asparagine reduce AldR binding to DNA but do not completely abolish it. Binding of amino acids can lead to structural modifications and changes in oligomeric association. Activity is also inhibited by 3 small molecule inhibitors, tetrahydroquinoline carbonitrile derivative (S010-0261), levothyroxine and liothyronine, which can disrupt the AldR-DNA complex. Its function is as follows. Transcriptional regulator that might play a role under hypoxic conditions. Regulates the expression of ald, which encodes L-alanine dehydrogenase. Serves as both an activator for ald expression in the presence of L-alanine and a repressor in the absence of L-alanine. Acts by binding directly to the upstream region of the ald gene. Four AldR-binding sites (O2, O1, O4 and O3) were identified upstream of the ald gene. O2, O1 and O4 are required for the induction of ald expression by alanine, while O3 is directly involved in the repression of ald expression, by occluding the access of RNA polymerase to the ald promoter. In addition to O3, both O1 and O4 are also necessary for full repression of ald expression in the absence of alanine. The protein is HTH-type transcriptional regulator AldR of Mycobacterium tuberculosis (strain ATCC 25618 / H37Rv).